The following is a 393-amino-acid chain: Protein Njmu-R1 (393 aa).

The interval 1-74 (MLPSLQESLD…AETPSGDDFS (74 aa)) is disordered. Ser8 and Ser18 each carry phosphoserine. Positions 9–24 (LDGDEKELESSEEGGS) are enriched in acidic residues.

In terms of assembly, interacts with TBC1D23; this interaction may be indirect.

May have a role in spermatogenesis. In Mus musculus (Mouse), this protein is Protein Njmu-R1.